A 226-amino-acid chain; its full sequence is Lipoprotein-releasing system ATP-binding protein LolD (226 aa).

The region spanning Leu-6–Val-226 is the ABC transporter domain. Position 42–49 (Gly-42–Ser-49) interacts with ATP.

The protein belongs to the ABC transporter superfamily. Lipoprotein translocase (TC 3.A.1.125) family. In terms of assembly, the complex is composed of two ATP-binding proteins (LolD) and two transmembrane proteins (LolC and LolE).

The protein resides in the cell inner membrane. Its function is as follows. Part of the ABC transporter complex LolCDE involved in the translocation of mature outer membrane-directed lipoproteins, from the inner membrane to the periplasmic chaperone, LolA. Responsible for the formation of the LolA-lipoprotein complex in an ATP-dependent manner. This Paramagnetospirillum magneticum (strain ATCC 700264 / AMB-1) (Magnetospirillum magneticum) protein is Lipoprotein-releasing system ATP-binding protein LolD.